Here is a 102-residue protein sequence, read N- to C-terminus: Integration host factor subunit beta (102 aa).

The protein belongs to the bacterial histone-like protein family. Heterodimer of an alpha and a beta chain.

Its function is as follows. This protein is one of the two subunits of integration host factor, a specific DNA-binding protein that functions in genetic recombination as well as in transcriptional and translational control. The polypeptide is Integration host factor subunit beta (Rhodopseudomonas palustris (strain BisA53)).